Consider the following 395-residue polypeptide: S-adenosylmethionine synthase (395 aa).

His12 serves as a coordination point for ATP. Asp14 provides a ligand contact to Mg(2+). Glu40 is a binding site for K(+). 2 residues coordinate L-methionine: Glu53 and Gln96. A flexible loop region spans residues 96–106 (QSKEIADAVNF). Residues 174–176 (DGK), 242–243 (RF), Asp251, 257–258 (RK), Ala274, and Lys278 contribute to the ATP site. Asp251 is a binding site for L-methionine. Lys282 serves as a coordination point for L-methionine.

It belongs to the AdoMet synthase family. In terms of assembly, homotetramer; dimer of dimers. The cofactor is Mg(2+). It depends on K(+) as a cofactor.

The protein localises to the cytoplasm. It catalyses the reaction L-methionine + ATP + H2O = S-adenosyl-L-methionine + phosphate + diphosphate. The protein operates within amino-acid biosynthesis; S-adenosyl-L-methionine biosynthesis; S-adenosyl-L-methionine from L-methionine: step 1/1. In terms of biological role, catalyzes the formation of S-adenosylmethionine (AdoMet) from methionine and ATP. The overall synthetic reaction is composed of two sequential steps, AdoMet formation and the subsequent tripolyphosphate hydrolysis which occurs prior to release of AdoMet from the enzyme. This Tropheryma whipplei (strain Twist) (Whipple's bacillus) protein is S-adenosylmethionine synthase.